The chain runs to 132 residues: Histone H2B.1 (132 aa).

Low complexity predominate over residues Met-1–Ala-13. A disordered region spans residues Met-1–Lys-39. Lys-7 bears the N6-acetyllysine; alternate mark. Lys-7 participates in a covalent cross-link: Glycyl lysine isopeptide (Lys-Gly) (interchain with G-Cter in SUMO); alternate. A Phosphoserine modification is found at Ser-11. At Lys-12 the chain carries N6-acetyllysine. Lys-17 bears the N6-acetyllysine; alternate mark. Lys-17 is covalently cross-linked (Glycyl lysine isopeptide (Lys-Gly) (interchain with G-Cter in SUMO); alternate). Residue Lys-18 forms a Glycyl lysine isopeptide (Lys-Gly) (interchain with G-Cter in SUMO) linkage. Residue Lys-125 forms a Glycyl lysine isopeptide (Lys-Gly) (interchain with G-Cter in ubiquitin) linkage.

It belongs to the histone H2B family. In terms of assembly, the nucleosome is a histone octamer containing two molecules each of H2A, H2B, H3 and H4 assembled in one H3-H4 heterotetramer and two H2A-H2B heterodimers. The octamer wraps approximately 147 bp of DNA. In terms of processing, monoubiquitinated by the UBC2-BRE1 complex to form H2BK123ub1. H2BK123ub1 gives a specific tag for epigenetic transcriptional activation and is also prerequisite for H3K4me and H3K79me formation. H2BK123ub1 also modulates the formation of double-strand breaks during meiosis and is a prerequisite for DNA-damage checkpoint activation. Phosphorylated by STE20 to form H2BS10ph during progression through meiotic prophase. May be correlated with chromosome condensation. Post-translationally, acetylated by GCN5 to form H2BK11ac and H2BK16ac. H2BK16ac can also be formed by ESA1. Acetylation of N-terminal lysines and particularly formation of H2BK11acK16ac has a positive effect on transcription. In terms of processing, sumoylation to form H2BK6su and probably also H2BK16su or H2BK17su, occurs preferentially near the telomeres and represses gene transcription.

The protein resides in the nucleus. The protein localises to the chromosome. In terms of biological role, core component of nucleosome. Nucleosomes wrap and compact DNA into chromatin, limiting DNA accessibility to the cellular machineries which require DNA as a template. Histones thereby play a central role in transcription regulation, DNA repair, DNA replication and chromosomal stability. DNA accessibility is regulated via a complex set of post-translational modifications of histones, also called histone code, and nucleosome remodeling. This chain is Histone H2B.1 (HTB1), found in Kluyveromyces lactis (strain ATCC 8585 / CBS 2359 / DSM 70799 / NBRC 1267 / NRRL Y-1140 / WM37) (Yeast).